Reading from the N-terminus, the 102-residue chain is Small ribosomal subunit protein uS10 (102 aa).

This sequence belongs to the universal ribosomal protein uS10 family. In terms of assembly, part of the 30S ribosomal subunit.

Its function is as follows. Involved in the binding of tRNA to the ribosomes. The sequence is that of Small ribosomal subunit protein uS10 from Methylocella silvestris (strain DSM 15510 / CIP 108128 / LMG 27833 / NCIMB 13906 / BL2).